The chain runs to 488 residues: Ribulose bisphosphate carboxylase large chain 1 (488 aa).

Positions 128 and 178 each coordinate substrate. Lys180 (proton acceptor) is an active-site residue. Substrate is bound at residue Lys182. Mg(2+)-binding residues include Lys206, Asp208, and Glu209. Lys206 is subject to N6-carboxylysine. The active-site Proton acceptor is the His298. Substrate contacts are provided by Arg299, His331, and Ser383.

This sequence belongs to the RuBisCO large chain family. Type I subfamily. In terms of assembly, heterohexadecamer of 8 large chains and 8 small chains. Mg(2+) is required as a cofactor.

It carries out the reaction 2 (2R)-3-phosphoglycerate + 2 H(+) = D-ribulose 1,5-bisphosphate + CO2 + H2O. The catalysed reaction is D-ribulose 1,5-bisphosphate + O2 = 2-phosphoglycolate + (2R)-3-phosphoglycerate + 2 H(+). RuBisCO catalyzes two reactions: the carboxylation of D-ribulose 1,5-bisphosphate, the primary event in carbon dioxide fixation, as well as the oxidative fragmentation of the pentose substrate. Both reactions occur simultaneously and in competition at the same active site. In Methylibium petroleiphilum (strain ATCC BAA-1232 / LMG 22953 / PM1), this protein is Ribulose bisphosphate carboxylase large chain 1.